The chain runs to 823 residues: Putative ankyrin repeat domain-containing protein 20A4 (823 aa).

ANK repeat units lie at residues Gln66–Val95, Glu99–Leu128, Tyr132–Ala161, Asp165–Ala194, and Leu198–Ala227. Disordered stretches follow at residues Val301–Asp343 and Gln356–Asp405. Basic and acidic residues predominate over residues Glu371–Gln384. Coiled coils occupy residues Lys431–Glu480, Glu565–Thr724, and Phe776–Val806.

The polypeptide is Putative ankyrin repeat domain-containing protein 20A4 (Homo sapiens (Human)).